Here is a 261-residue protein sequence, read N- to C-terminus: Hemin import ATP-binding protein HmuV (261 aa).

Positions 7 to 243 (LRGQNLSLQF…EIIDAVYGYK (237 aa)) constitute an ABC transporter domain. 39–46 (GPNGAGKS) is a binding site for ATP.

It belongs to the ABC transporter superfamily. Heme (hemin) importer (TC 3.A.1.14.5) family. As to quaternary structure, the complex is composed of two ATP-binding proteins (HmuV), two transmembrane proteins (HmuU) and a solute-binding protein (HmuT).

It localises to the cell inner membrane. Functionally, part of the ABC transporter complex HmuTUV involved in hemin import. Responsible for energy coupling to the transport system. The protein is Hemin import ATP-binding protein HmuV of Vibrio vulnificus (strain YJ016).